A 171-amino-acid polypeptide reads, in one-letter code: UPF0398 protein M28_Spy1394 (171 aa).

It belongs to the UPF0398 family.

In Streptococcus pyogenes serotype M28 (strain MGAS6180), this protein is UPF0398 protein M28_Spy1394.